Here is a 532-residue protein sequence, read N- to C-terminus: Alkaline phosphatase (532 aa).

Residues 1–20 are disordered; it reads MASERDPLLPVHGEGPESPS. A helical; Signal-anchor for type II membrane protein transmembrane segment spans residues 27–47; sequence WIKHGILLILVLSTVIFFYFF. Mg(2+) is bound at residue Asp68. A Zn(2+)-binding site is contributed by Asp68. The active-site Phosphoserine intermediate is the Ser115. Mg(2+) is bound by residues Asp166, Thr168, and Glu306. Residues Asp311, His315, Asp352, His353, and His456 each contribute to the Zn(2+) site.

The protein belongs to the alkaline phosphatase family. Mg(2+) serves as cofactor. Zn(2+) is required as a cofactor.

It localises to the membrane. It catalyses the reaction a phosphate monoester + H2O = an alcohol + phosphate. The polypeptide is Alkaline phosphatase (Schizosaccharomyces pombe (strain 972 / ATCC 24843) (Fission yeast)).